Reading from the N-terminus, the 248-residue chain is Adenosylcobinamide-GDP ribazoletransferase (248 aa).

The next 8 helical transmembrane spans lie at 3–23 (ELKA…PINI), 35–55 (SYFP…YLLL), 63–83 (IVMT…HIDG), 109–129 (LGTN…LFLS), 135–155 (LLFS…VFSI), 180–199 (FVIA…PLKD), 200–219 (LALL…KYIS), and 228–248 (DTLG…FSIL).

This sequence belongs to the CobS family. Mg(2+) is required as a cofactor.

Its subcellular location is the cell membrane. The catalysed reaction is alpha-ribazole + adenosylcob(III)inamide-GDP = adenosylcob(III)alamin + GMP + H(+). The enzyme catalyses alpha-ribazole 5'-phosphate + adenosylcob(III)inamide-GDP = adenosylcob(III)alamin 5'-phosphate + GMP + H(+). Its pathway is cofactor biosynthesis; adenosylcobalamin biosynthesis; adenosylcobalamin from cob(II)yrinate a,c-diamide: step 7/7. Its function is as follows. Joins adenosylcobinamide-GDP and alpha-ribazole to generate adenosylcobalamin (Ado-cobalamin). Also synthesizes adenosylcobalamin 5'-phosphate from adenosylcobinamide-GDP and alpha-ribazole 5'-phosphate. In Caldanaerobacter subterraneus subsp. tengcongensis (strain DSM 15242 / JCM 11007 / NBRC 100824 / MB4) (Thermoanaerobacter tengcongensis), this protein is Adenosylcobinamide-GDP ribazoletransferase.